Here is a 584-residue protein sequence, read N- to C-terminus: Aspartate--tRNA(Asp/Asn) ligase (584 aa).

Position 177 (Glu-177) interacts with L-aspartate. Residues 201–204 form an aspartate region; the sequence is QLFK. Arg-223 lines the L-aspartate pocket. ATP is bound by residues 223–225 and Gln-232; that span reads RDE. His-447 is an L-aspartate binding site. Glu-481 provides a ligand contact to ATP. Arg-488 lines the L-aspartate pocket. Residue 533–536 coordinates ATP; the sequence is GLDR.

The protein belongs to the class-II aminoacyl-tRNA synthetase family. Type 1 subfamily. Homodimer.

The protein resides in the cytoplasm. The catalysed reaction is tRNA(Asx) + L-aspartate + ATP = L-aspartyl-tRNA(Asx) + AMP + diphosphate. In terms of biological role, aspartyl-tRNA synthetase with relaxed tRNA specificity since it is able to aspartylate not only its cognate tRNA(Asp) but also tRNA(Asn). Reaction proceeds in two steps: L-aspartate is first activated by ATP to form Asp-AMP and then transferred to the acceptor end of tRNA(Asp/Asn). The chain is Aspartate--tRNA(Asp/Asn) ligase from Chlamydia abortus (strain DSM 27085 / S26/3) (Chlamydophila abortus).